The chain runs to 247 residues: Small ribosomal subunit protein uS3 (247 aa).

The KH type-2 domain maps to 51–119 (VAKRDKRPAG…ELHLNIVEIR (69 aa)). Residues 224-233 (PSAHDRRQQE) show a composition bias toward basic and acidic residues. The segment at 224 to 247 (PSAHDRRQQELQESGGASRPRRDR) is disordered.

It belongs to the universal ribosomal protein uS3 family. Part of the 30S ribosomal subunit. Forms a tight complex with proteins S10 and S14.

Functionally, binds the lower part of the 30S subunit head. Binds mRNA in the 70S ribosome, positioning it for translation. The chain is Small ribosomal subunit protein uS3 from Jannaschia sp. (strain CCS1).